The sequence spans 295 residues: Protease HtpX homolog (295 aa).

2 consecutive transmembrane segments (helical) span residues 6-26 (IGLF…VTSV) and 40-60 (LSSL…VSLL). Histidine 148 is a binding site for Zn(2+). Glutamate 149 is a catalytic residue. Histidine 152 serves as a coordination point for Zn(2+). Transmembrane regions (helical) follow at residues 163 to 183 (LIQG…SYAL) and 198 to 218 (IANI…VAYF). A Zn(2+)-binding site is contributed by glutamate 223.

This sequence belongs to the peptidase M48B family. It depends on Zn(2+) as a cofactor.

The protein localises to the cell inner membrane. This is Protease HtpX homolog from Leptospira interrogans serogroup Icterohaemorrhagiae serovar copenhageni (strain Fiocruz L1-130).